A 90-amino-acid chain; its full sequence is Large ribosomal subunit protein uL16c (90 aa).

This sequence belongs to the universal ribosomal protein uL16 family. As to quaternary structure, part of the 50S ribosomal subunit.

The protein resides in the plastid. Its subcellular location is the chloroplast. This is Large ribosomal subunit protein uL16c (rpl16) from Oenothera ammophila (Evening primerose).